A 296-amino-acid chain; its full sequence is Mitochondrial arginine transporter BAC2 (296 aa).

3 Solcar repeats span residues 13–93, 104–187, and 198–282; these read GREF…FSRS, PSYR…VRER, and ENLR…ALRC. 6 consecutive transmembrane segments (helical) span residues 16–36, 70–90, 110–130, 162–181, 204–224, and 260–280; these read FVAG…LDTL, AAPL…YAIF, ALGG…VELI, GLTI…FWTY, LVAG…LDVV, and TAVA…EVAL.

This sequence belongs to the mitochondrial carrier (TC 2.A.29) family. In terms of tissue distribution, high expression in flowers, stamens, petals and pollen. Expressed in roots, leaves and stems.

The protein resides in the mitochondrion inner membrane. Inhibited by mercuric chloride. Mitochondrial arginine transporter that catalyzes the counter-exchange of arginine with lysine, ornithine, arginine, histidine and citrulline. Substrate preference in reconstituted proteoliposomes is arginine &gt; homoarginine &gt; citrulline &gt; histidine &gt; lysine &gt; ornithine. May be involved in the delivery of arginine, released from seed reserves, to mitochondrial arginase and the export of ornithine. May contribute to proline accumulation in response to hyperosmotic stress. This is Mitochondrial arginine transporter BAC2 (BAC2) from Arabidopsis thaliana (Mouse-ear cress).